Reading from the N-terminus, the 1082-residue chain is SURP and G-patch domain-containing protein 2 (1082 aa).

T7 is subject to Phosphothreonine. Residues 65–97 (LSGSVAHSRDAGREGLRSDVFPGPSFRSSNPSI) form a disordered region. Residues 71 to 81 (HSRDAGREGLR) are compositionally biased toward basic and acidic residues. Phosphoserine occurs at positions 96 and 224. A Glycyl lysine isopeptide (Lys-Gly) (interchain with G-Cter in SUMO2) cross-link involves residue K228. T275 is modified (phosphothreonine). S277 carries the post-translational modification Phosphoserine. K305 participates in a covalent cross-link: Glycyl lysine isopeptide (Lys-Gly) (interchain with G-Cter in SUMO2). 3 positions are modified to phosphoserine: S315, S573, and S603. Residues 590–633 (IDQLVKRVIEGSLSPKERTLLKEDPAYWFLSDENSLEYKYYKLK) form an SURP motif 1 repeat. K650 is covalently cross-linked (Glycyl lysine isopeptide (Lys-Gly) (interchain with G-Cter in SUMO2)). The interval 694–779 (RRATTGTQTL…QTSSPCPSAD (86 aa)) is disordered. A compositionally biased stretch (low complexity) spans 697 to 708 (TTGTQTLLSSGT). Residues 727-738 (LPDRNDAAKDCP) show a composition bias toward basic and acidic residues. 2 positions are modified to phosphoserine: S754 and S757. An SURP motif 2 repeat occupies 787–830 (TAEKLARFVAQVGPEIEQFSIENSTDNPDLWFLHDQNSSAFKFY). 3 disordered regions span residues 849–930 (NLHT…EAAE), 982–1002 (RIAY…PKDL), and 1030–1061 (LGSL…EHKE). S863 is subject to Phosphoserine. Acidic residues-rich tracts occupy residues 868–877 (MEGEAEFEDE) and 885–904 (LESP…DGGE). Residues 990-999 (GRPMSKKKKP) show a composition bias toward basic residues. A Nuclear localization signal motif is present at residues 995–1000 (KKKKPK). Positions 1011–1057 (DKNLGFQMLQKMGWKEGHGLGSLGKGIREPVSVGTPSEGEGLGADGQ) constitute a G-patch domain.

In terms of tissue distribution, detected in adult testis, and in fetal brain and kidney.

It is found in the nucleus. Its function is as follows. May play a role in mRNA splicing. This chain is SURP and G-patch domain-containing protein 2 (SUGP2), found in Homo sapiens (Human).